A 234-amino-acid polypeptide reads, in one-letter code: UPF0758 protein Rfer_3252 (234 aa).

Positions 112 to 234 constitute an MPN domain; sequence IFATPDAVKH…ALSMAERGLL (123 aa). Zn(2+)-binding residues include His-183, His-185, and Asp-196. The JAMM motif signature appears at 183-196; it reads HNHPSGTVQPSRAD.

The protein belongs to the UPF0758 family.

This chain is UPF0758 protein Rfer_3252, found in Albidiferax ferrireducens (strain ATCC BAA-621 / DSM 15236 / T118) (Rhodoferax ferrireducens).